The primary structure comprises 390 residues: MRKMLAAVSRVLSGASQKPASRVLVASRNFANDATFEIKKCDLHRLEEGPPVTTVLTREDGLKYYRMMQTVRRMELKADQLYKQKIIRGFCHLCDGQEACCVGLEAGINPTDHLITAYRAHGFTFTRGLSVREILAELTGRKGGCAKGKGGSMHMYAKNFYGGNGIVGAQVPLGAGIALACKYNGKDEVCLTLYGDGAANQGQIFEAYNMAALWKLPCIFICENNRYGMGTSVERAAASTDYYKRGDFIPGLRVDGMDILCVREATRFAAAYCRSGKGPILMELQTYRYHGHSMSGPGVSYRTREEIQEVRSKSDPIMLLKDRMVNSNLASVEELKEIDVEVRKEIEDAAQFATADPEPPLEELGYHIYSSDPPFEVRGANQWIKFKSVS.

The transit peptide at 1–29 directs the protein to the mitochondrion; that stretch reads MRKMLAAVSRVLSGASQKPASRVLVASRN. N6-acetyllysine; alternate is present on Lys63. Lys63 bears the N6-succinyllysine; alternate mark. The pyruvate site is built by His92, Tyr118, Arg119, Ala157, Gly165, Val167, Asp196, Gly197, Ala198, Asn225, and Tyr227. 2 residues coordinate thiamine diphosphate: Tyr118 and Arg119. Positions 165, 167, 196, 197, 198, and 225 each coordinate thiamine diphosphate. Asp196 serves as a coordination point for Mg(2+). Residues Asn225 and Tyr227 each coordinate Mg(2+). At Ser232 the chain carries Phosphoserine; by PDK1. Lys244 is modified (N6-acetyllysine; alternate). N6-succinyllysine; alternate is present on Lys244. N6-succinyllysine is present on Lys277. Thiamine diphosphate is bound at residue His292. At Ser293 the chain carries Phosphoserine; by PDK1, PDK2, PDK3 and PDK4. Ser295 is modified (phosphoserine). Ser300 carries the post-translational modification Phosphoserine; by PDK1, PDK2, PDK3 and PDK4. Phosphotyrosine is present on Tyr301. Lys313 is subject to N6-acetyllysine; alternate. Lys313 bears the N6-succinyllysine; alternate mark. N6-acetyllysine is present on residues Lys321 and Lys336. Lys385 carries the post-translational modification N6-succinyllysine.

In terms of assembly, heterotetramer of two PDHA1 and two PDHB subunits. The heterotetramer interacts with DLAT, and is part of the multimeric pyruvate dehydrogenase complex that contains multiple copies of pyruvate dehydrogenase (E1), dihydrolipoamide acetyltransferase (DLAT, E2) and lipoamide dehydrogenase (DLD, E3). These subunits are bound to an inner core composed of about 48 DLAT and 12 PDHX molecules. Thiamine diphosphate serves as cofactor. It depends on Mg(2+) as a cofactor. Phosphorylation at Ser-232, Ser-293 and Ser-300 by PDK family kinases inactivates the enzyme; for this phosphorylation at a single site is sufficient. Phosphorylation at Ser-293 interferes with access to active site, and thereby inactivates the enzyme. Dephosphorylation at all three sites, i.e. at Ser-232, Ser-293 and Ser-300, is required for reactivation. In terms of processing, acetylation alters the phosphorylation pattern. Deacetylated by SIRT3.

It localises to the mitochondrion matrix. The catalysed reaction is N(6)-[(R)-lipoyl]-L-lysyl-[protein] + pyruvate + H(+) = N(6)-[(R)-S(8)-acetyldihydrolipoyl]-L-lysyl-[protein] + CO2. Its activity is regulated as follows. Pyruvate dehydrogenase activity is inhibited by phosphorylation of PDHA1; it is reactivated by dephosphorylation. Its function is as follows. The pyruvate dehydrogenase complex catalyzes the overall conversion of pyruvate to acetyl-CoA and CO(2), and thereby links the glycolytic pathway to the tricarboxylic cycle. The chain is Pyruvate dehydrogenase E1 component subunit alpha, somatic form, mitochondrial (PDHA1) from Pan troglodytes (Chimpanzee).